Consider the following 361-residue polypeptide: Alanine racemase (361 aa).

Lysine 34 functions as the Proton acceptor; specific for D-alanine in the catalytic mechanism. Lysine 34 carries the N6-(pyridoxal phosphate)lysine modification. Arginine 129 is a substrate binding site. Catalysis depends on tyrosine 256, which acts as the Proton acceptor; specific for L-alanine. Position 304 (methionine 304) interacts with substrate.

Belongs to the alanine racemase family. Homodimer. Requires pyridoxal 5'-phosphate as cofactor.

It catalyses the reaction L-alanine = D-alanine. It participates in amino-acid biosynthesis; D-alanine biosynthesis; D-alanine from L-alanine: step 1/1. Catalyzes the interconversion of L-alanine and D-alanine. May also act on other amino acids. This chain is Alanine racemase (alr), found in Corynebacterium glutamicum (strain ATCC 13032 / DSM 20300 / JCM 1318 / BCRC 11384 / CCUG 27702 / LMG 3730 / NBRC 12168 / NCIMB 10025 / NRRL B-2784 / 534).